The sequence spans 183 residues: Large ribosomal subunit protein uL5 (183 aa).

The protein belongs to the universal ribosomal protein uL5 family. As to quaternary structure, part of the 50S ribosomal subunit; part of the 5S rRNA/L5/L18/L25 subcomplex. Contacts the 5S rRNA and the P site tRNA. Forms a bridge to the 30S subunit in the 70S ribosome.

Functionally, this is one of the proteins that bind and probably mediate the attachment of the 5S RNA into the large ribosomal subunit, where it forms part of the central protuberance. In the 70S ribosome it contacts protein S13 of the 30S subunit (bridge B1b), connecting the 2 subunits; this bridge is implicated in subunit movement. Contacts the P site tRNA; the 5S rRNA and some of its associated proteins might help stabilize positioning of ribosome-bound tRNAs. The sequence is that of Large ribosomal subunit protein uL5 from Leptospira biflexa serovar Patoc (strain Patoc 1 / Ames).